Consider the following 273-residue polypeptide: MRQIAIYGKGGIGKSTTTQNLTAALATMGNKILLVGCDPKADSTRMLLGGLNQKTVLDTLRSEGDEGVNLDVVVQPGFGNIKCVESGGPEPGVGCAGRGIITSIGLLENLGAYTEDLDYVFYDVLGDVVCGGFAMPIREGKAKEIYIVASGELMAIYAANNICKGLAKFAKGGARLGGIICNSRNVDGERELLEAFAKKLGSQLIHFVPRDNIVQRAEINRKTVIDFDPESNQAKEYLTLASNVQNNTKLVVPTPLPMEELEAMMVEFGIVEL.

G8 to S15 lines the ATP pocket. Residue C95 participates in [4Fe-4S] cluster binding. R98 carries the ADP-ribosylarginine; by dinitrogenase reductase ADP-ribosyltransferase modification. [4Fe-4S] cluster is bound at residue C130.

This sequence belongs to the NifH/BchL/ChlL family. In terms of assembly, homodimer. It depends on [4Fe-4S] cluster as a cofactor. The reversible ADP-ribosylation of Arg-98 inactivates the nitrogenase reductase and regulates nitrogenase activity.

The catalysed reaction is N2 + 8 reduced [2Fe-2S]-[ferredoxin] + 16 ATP + 16 H2O = H2 + 8 oxidized [2Fe-2S]-[ferredoxin] + 2 NH4(+) + 16 ADP + 16 phosphate + 6 H(+). Functionally, the key enzymatic reactions in nitrogen fixation are catalyzed by the nitrogenase complex, which has 2 components: the iron protein and the molybdenum-iron protein. The sequence is that of Nitrogenase iron protein from Methanosarcina mazei (strain ATCC BAA-159 / DSM 3647 / Goe1 / Go1 / JCM 11833 / OCM 88) (Methanosarcina frisia).